A 506-amino-acid polypeptide reads, in one-letter code: ATP synthase subunit alpha (506 aa).

170–177 provides a ligand contact to ATP; the sequence is GDRQTGKT.

It belongs to the ATPase alpha/beta chains family. As to quaternary structure, F-type ATPases have 2 components, CF(1) - the catalytic core - and CF(0) - the membrane proton channel. CF(1) has five subunits: alpha(3), beta(3), gamma(1), delta(1), epsilon(1). CF(0) has four main subunits: a(1), b(1), b'(1) and c(9-12).

Its subcellular location is the cellular thylakoid membrane. It carries out the reaction ATP + H2O + 4 H(+)(in) = ADP + phosphate + 5 H(+)(out). Its function is as follows. Produces ATP from ADP in the presence of a proton gradient across the membrane. The alpha chain is a regulatory subunit. This is ATP synthase subunit alpha from Synechococcus sp. (strain CC9605).